Consider the following 98-residue polypeptide: NADH-ubiquinone oxidoreductase chain 4L (98 aa).

The next 3 membrane-spanning stretches (helical) occupy residues 1–21 (MSLI…GLLM), 26–46 (LMSA…FTTL), and 61–81 (IILL…LVMI).

The protein belongs to the complex I subunit 4L family. Core subunit of respiratory chain NADH dehydrogenase (Complex I) which is composed of 45 different subunits.

The protein resides in the mitochondrion inner membrane. It carries out the reaction a ubiquinone + NADH + 5 H(+)(in) = a ubiquinol + NAD(+) + 4 H(+)(out). In terms of biological role, core subunit of the mitochondrial membrane respiratory chain NADH dehydrogenase (Complex I) which catalyzes electron transfer from NADH through the respiratory chain, using ubiquinone as an electron acceptor. Part of the enzyme membrane arm which is embedded in the lipid bilayer and involved in proton translocation. This chain is NADH-ubiquinone oxidoreductase chain 4L (MT-ND4L), found in Physeter macrocephalus (Sperm whale).